We begin with the raw amino-acid sequence, 89 residues long: Small ribosomal subunit protein uS15 (89 aa).

The protein belongs to the universal ribosomal protein uS15 family. In terms of assembly, part of the 30S ribosomal subunit. Forms a bridge to the 50S subunit in the 70S ribosome, contacting the 23S rRNA.

In terms of biological role, one of the primary rRNA binding proteins, it binds directly to 16S rRNA where it helps nucleate assembly of the platform of the 30S subunit by binding and bridging several RNA helices of the 16S rRNA. Forms an intersubunit bridge (bridge B4) with the 23S rRNA of the 50S subunit in the ribosome. In Rhizobium rhizogenes (strain K84 / ATCC BAA-868) (Agrobacterium radiobacter), this protein is Small ribosomal subunit protein uS15.